The sequence spans 215 residues: Probable phosphoglycerate mutase GpmB (215 aa).

Substrate-binding positions include Arg8–Asn15, Gln21–Gly22, Arg58, Lys60, Glu82–Met85, Arg104–Arg105, and Gly151–Ile152. His9 serves as the catalytic Tele-phosphohistidine intermediate. The active-site Proton donor/acceptor is the Glu82.

It belongs to the phosphoglycerate mutase family. GpmB subfamily.

It carries out the reaction (2R)-2-phosphoglycerate = (2R)-3-phosphoglycerate. Its pathway is carbohydrate degradation; glycolysis; pyruvate from D-glyceraldehyde 3-phosphate: step 3/5. The chain is Probable phosphoglycerate mutase GpmB from Salmonella choleraesuis (strain SC-B67).